Reading from the N-terminus, the 436-residue chain is 2-aminohexano-6-lactam racemase (436 aa).

Residues 110-111 (GS), tyrosine 137, and 238-241 (DEVK) each bind pyridoxal 5'-phosphate. Tyrosine 137 is a catalytic residue. Lysine 267 bears the N6-(pyridoxal phosphate)lysine mark. Position 295 (threonine 295) interacts with pyridoxal 5'-phosphate.

The protein belongs to the class-III pyridoxal-phosphate-dependent aminotransferase family. Monomer. Requires pyridoxal 5'-phosphate as cofactor.

It catalyses the reaction L-2-aminohexano-6-lactam = D-2-aminohexano-6-lactam. In terms of biological role, catalyzes the interconversion of L-alpha-amino-epsilon-caprolactam and D-alpha-amino-epsilon-caprolactam. This Achromobacter obae protein is 2-aminohexano-6-lactam racemase.